The chain runs to 298 residues: Probable phosphite transport system-binding protein HtxB (298 aa).

Positions 1–33 (MQVFTLFSKFKKALTRAILAFIATIIVCTPAQA) are cleaved as a signal peptide.

It belongs to the phosphate/phosphite/phosphonate binding protein family.

Probably forms part of a binding-protein-dependent hypophosphite transporter. The sequence is that of Probable phosphite transport system-binding protein HtxB (htxB) from Stutzerimonas stutzeri (Pseudomonas stutzeri).